The following is a 473-amino-acid chain: Rifampicin monooxygenase (473 aa).

FAD contacts are provided by T12, E31, K32, and R41. Residue R43 coordinates rifampicin. FAD contacts are provided by Q98, V122, and T156. R196 serves as a coordination point for rifampicin. D276 contributes to the FAD binding site. G285 serves as a coordination point for rifampicin. The FAD site is built by L289 and N290.

It belongs to the rifampicin monooxygenase family. As to quaternary structure, homodimer. FAD is required as a cofactor.

It catalyses the reaction rifampicin + NADPH + O2 = rifampicin para-naphthoquinone carboxamide + NADP(+) + H2O + H(+). It carries out the reaction rifampicin + NADH + O2 = rifampicin para-naphthoquinone carboxamide + NAD(+) + H2O + H(+). Its function is as follows. Monooxygenase that can modify rifampicin, thereby inactivating its antibiotic activity. It constitutes a secondary rifampicin resistance factor. This is Rifampicin monooxygenase from Nocardia farcinica (strain IFM 10152).